Here is a 388-residue protein sequence, read N- to C-terminus: Staphopain A (388 aa).

Positions 1-25 are cleaved as a signal peptide; sequence MKRNFPKLIALSLIFSLSITPIANA. Residues 26-214 constitute a propeptide that is removed on maturation; sequence ESNSNIKAKD…TSQFKSNNYT (189 aa). Residues cysteine 238, histidine 334, and asparagine 355 contribute to the active site.

This sequence belongs to the peptidase C47 family. In the cytoplasm, prematurely activated/folded ScpA forms a stable non-covalent complex with ScpB. Cleavage leads to the activation of ScpA probably by an auto-catalytic manner.

Its subcellular location is the secreted. It catalyses the reaction Broad endopeptidase action on proteins including elastin, but rather limited hydrolysis of small-molecule substrates. Assays are conveniently made with hemoglobin, casein or Z-Phe-Arg-NHMec as substrate.. With respect to regulation, prematurely activated/folded staphopain A is inhibited by staphostatin A (ScpB), which is probably required to protect staphylococcal cytoplasmic proteins from degradation by ScpA. Cysteine protease that plays an important role in the inhibition of host innate immune response. Cleaves host elastins found in connective tissues, pulmonary surfactant protein A in the lungs, and the chemokine receptor CXCR2 on leukocytes. Proteolytic cleavage of surfactant protein A impairs bacterial phagocytosis by neutrophils while CXCR2 degradation blocks neutrophil activation and chemotaxis. Additionally, promotes vascular leakage by activating the plasma kallikerin/kinin system, resulting in hypotension. The sequence is that of Staphopain A (sspP) from Staphylococcus aureus (strain MRSA252).